The chain runs to 524 residues: Chromosomal replication initiator protein DnaA (524 aa).

Residues 1-105 (MSQNSSSLLE…EQEIPETPAQ (105 aa)) are domain I, interacts with DnaA modulators. The interval 95-183 (PEQEIPETPA…PAHNPNREVS (89 aa)) is disordered. The tract at residues 106-182 (QEFKYQPDAP…TPAHNPNREV (77 aa)) is domain II. Pro residues predominate over residues 148 to 158 (APEPHPAPIAD). Positions 183–399 (SLNPKYTFES…GALIRVSAYS (217 aa)) are domain III, AAA+ region. ATP is bound by residues G227, G229, K230, and T231. The segment at 400 to 524 (SLINQPIDKE…TQLIKSRGRN (125 aa)) is domain IV, binds dsDNA.

The protein belongs to the DnaA family. In terms of assembly, oligomerizes as a right-handed, spiral filament on DNA at oriC.

The protein resides in the cytoplasm. Its function is as follows. Plays an essential role in the initiation and regulation of chromosomal replication. ATP-DnaA binds to the origin of replication (oriC) to initiate formation of the DNA replication initiation complex once per cell cycle. Binds the DnaA box (a 9 base pair repeat at the origin) and separates the double-stranded (ds)DNA. Forms a right-handed helical filament on oriC DNA; dsDNA binds to the exterior of the filament while single-stranded (ss)DNA is stabiized in the filament's interior. The ATP-DnaA-oriC complex binds and stabilizes one strand of the AT-rich DNA unwinding element (DUE), permitting loading of DNA polymerase. After initiation quickly degrades to an ADP-DnaA complex that is not apt for DNA replication. Binds acidic phospholipids. This chain is Chromosomal replication initiator protein DnaA, found in Corynebacterium glutamicum (strain R).